Reading from the N-terminus, the 305-residue chain is PI protein (305 aa).

This sequence belongs to the initiator RepB protein family. Homodimer.

In terms of biological role, initiation for plasmid R6K DNA replication. This chain is PI protein (pir), found in Escherichia coli.